The primary structure comprises 1203 residues: Delphilin (1203 aa).

In terms of domain architecture, PDZ 1 spans 1 to 79; sequence MPATNQGWPE…VPPSLGVLPG (79 aa). Ala3 is lipidated: S-palmitoyl cysteine. Positions 215–270 are disordered; that stretch reads GAQRLRRSRSEERPERLLVSTRASAAPRRPDEPPPRKATSLLGGRTGPGGPRRTVR. Low complexity predominate over residues 231-241; it reads LLVSTRASAAP. A PDZ 2 domain is found at 268–345; sequence TVRVYKGNKS…MPTLVVEEGP (78 aa). At Ser303 the chain carries Phosphoserine. Disordered stretches follow at residues 466–541, 563–586, 611–656, and 710–821; these read ESSL…TPNP, IGTM…GPRT, LASP…PPSR, and SFVT…SHMS. Positions 500–509 are enriched in polar residues; it reads RSQGLETSLS. Phosphoserine occurs at positions 572, 613, 644, and 647. A compositionally biased stretch (low complexity) spans 611 to 625; it reads LASPSSSESHPYASL. Low complexity predominate over residues 715–740; the sequence is ERSSASECVSSSEEGSSLTYSSISDH. Positions 741 to 756 are enriched in pro residues; sequence IPPPPLSPPPPPPLPF. Residues 774 to 784 show a composition bias toward polar residues; that stretch reads QSLTKPLTQIN. The segment covering 786–803 has biased composition (pro residues); sequence PVPPPPPPPLPPPVPCAP. In terms of domain architecture, FH2 spans 812–1203; that stretch reads HRRSETSHMS…SSGMVSPLAW (392 aa).

Interacts with C-terminus of the glutamate receptor GRID2 via PDZ domain. Isoform 2 also interacts with Profilin-2/PFN2 and with the monocarboxylate transporter SLC16A7 via PDZ domain. The interaction of isoform 2 with GRID2 is dependent on GRID2 phosphorylation by PKA. Post-translationally, isoform 2 is palmitoylated. Palmitoylation of isoform 2 is necessary for the enhanced cell surface expression of GRID2, and is also responsible for the accumulation of isoform 2 within dendritic spines. Isoform 1 and isoform 2 are differentially localized, probably modulating GRID2 signaling in neurons. Isoform 1 is expressed in the cerebellum, but not in the cerebral cortex. Isoform 2 is expressed in the cell body of purkinge cells of the cerebellum and weakly expressed in the cerebrum and the brainstem as well as various nuclei of the thalamus. Isoform 2 is highly expressed in the cerebral cortex than in the cerebellum. Isoform 3 is expressed in the cerebellum and cerebrum.

The protein localises to the postsynaptic cell membrane. The protein resides in the cell projection. It is found in the dendritic spine. Its subcellular location is the synapse. It localises to the cell membrane. Functionally, postsynaptic scaffolding protein at the Purkinje cell synapse, where it may serve to link GRID2 with actin cytoskeleton and various signaling molecules. This is Delphilin (Grid2ip) from Mus musculus (Mouse).